The following is a 171-amino-acid chain: Transcription factor E (171 aa).

Residues 5 to 88 form the HTH TFE/IIEalpha-type domain; sequence YEDPFIRIAV…RWRSRREEVE (84 aa).

This sequence belongs to the TFE family. Monomer. Interaction with RNA polymerase subunits RpoF and RpoE is necessary for Tfe stimulatory transcription activity. Able to interact with Tbp and RNA polymerase in the absence of DNA promoter. Interacts both with the preinitiation and elongation complexes.

Its function is as follows. Transcription factor that plays a role in the activation of archaeal genes transcribed by RNA polymerase. Facilitates transcription initiation by enhancing TATA-box recognition by TATA-box-binding protein (Tbp), and transcription factor B (Tfb) and RNA polymerase recruitment. Not absolutely required for transcription in vitro, but particularly important in cases where Tbp or Tfb function is not optimal. It dynamically alters the nucleic acid-binding properties of RNA polymerases by stabilizing the initiation complex and destabilizing elongation complexes. Seems to translocate with the RNA polymerase following initiation and acts by binding to the non template strand of the transcription bubble in elongation complexes. This Cenarchaeum symbiosum (strain A) protein is Transcription factor E.